Consider the following 313-residue polypeptide: Zinc transporter ZitB (313 aa).

Topologically, residues 1-20 (MAHSHSHTSSHLPEDNNARR) are cytoplasmic. Residues 21–41 (LLYAFGVTAGFMLVEVVGGFL) traverse the membrane as a helical segment. Topologically, residues 42 to 47 (SGSLAL) are periplasmic. A helical membrane pass occupies residues 48–68 (LADAGHMLTDTAALLFALLAV). Topologically, residues 69 to 89 (QFSRRPPTIRHTFGWLRLTTL) are cytoplasmic. Residues 90-110 (AAFVNAIALVVITILIVWEAI) form a helical membrane-spanning segment. Topologically, residues 111–121 (ERFRTPRPVEG) are periplasmic. Residues 122 to 142 (GMMMAIAVAGLLANILSFWLL) form a helical membrane-spanning segment. The Cytoplasmic portion of the chain corresponds to 143–159 (HHGSEEKNLNVRAAALH). Residues 160-180 (VLGDLLGSVGAIIAALIIIWT) form a helical membrane-spanning segment. Position 181 (glycine 181) is a topological domain, periplasmic. Residues 182-202 (WTPADPILSILVSLLVLRSAW) traverse the membrane as a helical segment. Over 203–313 (RLLKDSVNEL…GVSGHSHHHH (111 aa)) the chain is Cytoplasmic.

The protein belongs to the cation diffusion facilitator (CDF) transporter (TC 2.A.4) family. SLC30A subfamily.

The protein resides in the cell inner membrane. In terms of biological role, involved in zinc efflux across the cytoplasmic membrane, thus reducing zinc accumulation in the cytoplasm and rendering bacteria more resistant to zinc. It may contribute to zinc homeostasis at low concentrations of zinc, whereas ZntA is required for growth at more toxic concentrations. In Escherichia coli (strain K12), this protein is Zinc transporter ZitB (zitB).